A 1023-amino-acid chain; its full sequence is 2-oxoglutarate dehydrogenase complex component E1 (1023 aa).

A mitochondrion-targeting transit peptide spans 1-40 (MFHLRTCAAKLRPLTASQTVKTFSQNKPAAIRTFQQIRCY). Lys-74 carries the post-translational modification N6-succinyllysine. At Ser-100 the chain carries Phosphoserine. Residues His-143, Asp-156, and Asp-158 each contribute to the Ca(2+) site. Position 312 (Arg-312) interacts with thiamine diphosphate. At Lys-401 the chain carries N6-acetyllysine. Residues Asp-411, Asn-444, and Ile-446 each contribute to the thiamine diphosphate site. Mg(2+) is bound by residues Asp-411, Asn-444, and Ile-446. Residue Lys-534 forms a Glycyl lysine isopeptide (Lys-Gly) (interchain with G-Cter in ubiquitin) linkage. Residue Lys-564 is modified to N6-succinyllysine. Gln-676 provides a ligand contact to thiamine diphosphate. Residues 933-939 (LSPFPFD) are recognized by alloreactive CD8 cytotoxic T-lymphocytes in association with a class I MHC protein. Lys-970 bears the N6-acetyllysine mark.

Belongs to the alpha-ketoglutarate dehydrogenase family. In terms of assembly, homodimer. The 2-oxoglutarate dehydrogenase complex is composed of OGDH (2-oxoglutarate dehydrogenase; E1), DLST (dihydrolipoamide succinyltransferase; E2), DLD (dihydrolipoamide dehydrogenase; E3) and the assembly factor KGD4. It contains multiple copies of the three enzymatic components (E1, E2 and E3). In the nucleus, the 2-oxoglutarate dehydrogenase complex associates with KAT2A. Interacts with ABHD11; this interaction maintains the functional lipoylation of the 2-oxoglutarate dehydrogenase complex. Thiamine diphosphate serves as cofactor. Requires Mg(2+) as cofactor.

It localises to the mitochondrion. The protein resides in the nucleus. It catalyses the reaction N(6)-[(R)-lipoyl]-L-lysyl-[protein] + 2-oxoglutarate + H(+) = N(6)-[(R)-S(8)-succinyldihydrolipoyl]-L-lysyl-[protein] + CO2. With respect to regulation, calcium ions and ADP stimulate, whereas ATP and NADH reduce catalytic activity. Functionally, 2-oxoglutarate dehydrogenase (E1o) component of the 2-oxoglutarate dehydrogenase complex (OGDHC). Participates in the first step, rate limiting for the overall conversion of 2-oxoglutarate to succinyl-CoA and CO(2) catalyzed by the whole OGDHC. Catalyzes the irreversible decarboxylation of 2-oxoglutarate (alpha-ketoglutarate) via the thiamine diphosphate (ThDP) cofactor and subsequent transfer of the decarboxylated acyl intermediate on an oxidized dihydrolipoyl group that is covalently amidated to the E2 enzyme (dihydrolipoyllysine-residue succinyltransferase or DLST). Plays a key role in the Krebs (citric acid) cycle, which is a common pathway for oxidation of fuel molecules, including carbohydrates, fatty acids, and amino acids. Can catalyze the decarboxylation of 2-oxoadipate in vitro, but at a much lower rate than 2-oxoglutarate. Mainly active in the mitochondrion. A fraction of the 2-oxoglutarate dehydrogenase complex also localizes in the nucleus and is required for lysine succinylation of histones: associates with KAT2A on chromatin and provides succinyl-CoA to histone succinyltransferase KAT2A. The protein is 2-oxoglutarate dehydrogenase complex component E1 of Mus musculus (Mouse).